The primary structure comprises 644 residues: Exoribonuclease 2 (644 aa).

One can recognise an RNB domain in the interval 189-516 (RQDLTALNFV…NHRLLKAVIK (328 aa)). An S1 motif domain is found at 561–643 (NTRFAAEIID…ETRSIIARPA (83 aa)).

It belongs to the RNR ribonuclease family. RNase II subfamily.

Its subcellular location is the cytoplasm. It carries out the reaction Exonucleolytic cleavage in the 3'- to 5'-direction to yield nucleoside 5'-phosphates.. Involved in mRNA degradation. Hydrolyzes single-stranded polyribonucleotides processively in the 3' to 5' direction. In Salmonella newport (strain SL254), this protein is Exoribonuclease 2.